A 577-amino-acid chain; its full sequence is Signal peptide peptidase-like 2B (577 aa).

Positions 1–19 (MAAARLAASLLLLAAQVAC) are cleaved as a signal peptide. Over 20–168 (EFGVLRVVPQ…APSEPVMDYN (149 aa)) the chain is Lumenal. One can recognise a PA domain in the interval 49-149 (LPHDLNKVSL…RDLQDIFRRF (101 aa)). N-linked (GlcNAc...) asparagine glycosylation occurs at Asn-91. A helical membrane pass occupies residues 169-189 (MVIIFIMAVGTVALGGYWAGS). The Cytoplasmic portion of the chain corresponds to 190–216 (HDVKKYMKHKRDDVPEKQEDEAVDVTP). A helical transmembrane segment spans residues 217-237 (VMICVFVVMCCFMLVLLYYFY). Topologically, residues 238 to 239 (DR) are lumenal. A helical transmembrane segment spans residues 240–260 (LVYVIIGIFCLASSTGLYSCL). The Cytoplasmic portion of the chain corresponds to 261–286 (APCVRKLPFCTCRVPDNNLPYFHKRP). A helical transmembrane segment spans residues 287 to 307 (QARMLLLALFCVTVSVVWGVF). Residues 308-312 (RNEDQ) lie on the Lumenal side of the membrane. A helical membrane pass occupies residues 313–333 (WAWVLQDTLGIAFCLYMLRTI). At 334–341 (RLPTFKAC) the chain is on the cytoplasmic side. A helical transmembrane segment spans residues 342-362 (TLLLLVLFVYDIFFVFITPYL). The active site involves Asp-352. Residues 363–405 (TKSGNSIMVEVATGPSNSSTHEKLPMVLKVPRLNTSPLSLCDR) lie on the Lumenal side of the membrane. A helical transmembrane segment spans residues 406–426 (PFSLLGFGDILVPGLLVAYCH). Asp-414 is an active-site residue. Residues 427 to 438 (RFDIQVQSSRIY) lie on the Cytoplasmic side of the membrane. Residues 439–459 (FVACTIAYGLGLLVTFVALVL) traverse the membrane as a helical segment. Topologically, residues 460 to 463 (MRHG) are lumenal. The chain crosses the membrane as a helical span at residues 464-484 (QPALLYLVPCTLLTSCTVALW). The short motif at 465–467 (PAL) is the PAL element. Topologically, residues 485 to 577 (RREMGAFWTG…IPVVTPGTSA (93 aa)) are cytoplasmic. Residues 502-577 (QTPWAAPQGP…IPVVTPGTSA (76 aa)) are disordered.

The protein belongs to the peptidase A22B family. As to quaternary structure, monomer. Homodimer. Interacts with ITM2B and TNF. Glycosylated.

Its subcellular location is the cell membrane. The protein resides in the golgi apparatus membrane. It localises to the lysosome membrane. It is found in the endosome membrane. The protein localises to the membrane. Its function is as follows. Intramembrane-cleaving aspartic protease (I-CLiP) that cleaves type II membrane signal peptides in the hydrophobic plane of the membrane. Functions in ITM2B and TNF processing. Catalyzes the intramembrane cleavage of the anchored fragment of shed TNF-alpha (TNF), which promotes the release of the intracellular domain (ICD) for signaling to the nucleus. May play a role in the regulation of innate and adaptive immunity. The protein is Signal peptide peptidase-like 2B of Rattus norvegicus (Rat).